The following is a 453-amino-acid chain: MKFRSLIKKTSNWLTATPERSLDNAYKAALKIKEIEDNHFGGKKVSKENADYGDSVISYFKTEVNGYLQKINMGLGVFKTSRLFLNISNIQELPQERPTERELQKNATTAAIIFEKLEFIDQVASKYQSRDTQEVYNGSLVLAKESSQDKETQTLDNKSTNQTNSKLSNNNKISSGQNDSRLESASQKTGVLPRSFINTLNKIKQEIDPKSGESEEQVLNKYRKSRLRTALSIKFILLLIIVPLLTHQLTKTFLLTPIIHQYFQNHEQVVFINKDLEEEAFEELSHYEEILRFQGLIGLREPLTDEEVEEKVQEKAREITEEYRAQGIDSIGNVFADLFSVTAFAIVIVSSRKEIEVLKSFLDEILYGLSDPAKAFLIILFTDMFVGFHSPHGWEVILEGVARHFGLPENQEFNFLFIATFPVILDTVLKYWIFRYLNRISPSAVATYKNMNE.

Residues 147–189 form a disordered region; sequence SQDKETQTLDNKSTNQTNSKLSNNNKISSGQNDSRLESASQKT. Polar residues predominate over residues 154–163; that stretch reads TLDNKSTNQT. The span at 164 to 175 shows a compositional bias: low complexity; that stretch reads NSKLSNNNKISS. The span at 176 to 189 shows a compositional bias: polar residues; the sequence is GQNDSRLESASQKT. 4 helical membrane passes run 235-255, 330-350, 377-397, and 413-433; these read FILL…TFLL, SIGN…VIVS, LIIL…WEVI, and FNFL…KYWI.

The protein belongs to the CemA family.

It localises to the cell inner membrane. Functionally, required for H(+) efflux immediately after light irradiation to form a rapid H(+) concentration gradient across the thylakoid membranes. Together with PxcL, contributes to transient H(+) uptake following dark to light transition. In Crocosphaera subtropica (strain ATCC 51142 / BH68) (Cyanothece sp. (strain ATCC 51142)), this protein is Proton extrusion protein PxcA.